The sequence spans 430 residues: Resistance to inhibitors of cholinesterase protein 19 (430 aa).

Residues Ala-56 to Glu-260 enclose the AH domain. Residues Gly-279–Glu-342 are disordered. Positions Lys-281–Ala-294 are enriched in basic and acidic residues.

In terms of assembly, interacts with the GTPase activator protein tbc-8; the interaction is direct and may be required for the activation of rab-2 and dense vesicle maturation in cholinergic motoneurons. Interacts with rund-1. In terms of tissue distribution, expressed in all neurons. Highly expressed in m2 pharyngeal neurons and some pharyngeal interneurons. Also expressed in the excretory canal and the gland cells located just below the nerve ring in the head.

The protein resides in the cytoplasm. Its subcellular location is the cytoplasmic vesicle membrane. Its function is as follows. May be involved in neurotransmitter secretion. In association with the GTPase activator protein tbc-8 activates rab-2 during dense core vesicle maturation in cholinergic motoneurons. The polypeptide is Resistance to inhibitors of cholinesterase protein 19 (Caenorhabditis elegans).